The sequence spans 84 residues: RNA-binding protein Hfq (84 aa).

A Sm domain is found at 9-69 (DRFLNILRTN…VSTIMPESFV (61 aa)).

It belongs to the Hfq family. In terms of assembly, homohexamer.

Its function is as follows. RNA chaperone that binds small regulatory RNA (sRNAs) and mRNAs to facilitate mRNA translational regulation in response to envelope stress, environmental stress and changes in metabolite concentrations. Also binds with high specificity to tRNAs. The chain is RNA-binding protein Hfq from Thermosipho africanus (strain TCF52B).